The following is a 145-amino-acid chain: Putative pre-16S rRNA nuclease (145 aa).

Belongs to the YqgF nuclease family.

The protein resides in the cytoplasm. Functionally, could be a nuclease involved in processing of the 5'-end of pre-16S rRNA. This is Putative pre-16S rRNA nuclease from Tropheryma whipplei (strain Twist) (Whipple's bacillus).